The chain runs to 427 residues: Glutamate-1-semialdehyde 2,1-aminomutase (427 aa).

Lys267 carries the N6-(pyridoxal phosphate)lysine modification.

It belongs to the class-III pyridoxal-phosphate-dependent aminotransferase family. HemL subfamily. As to quaternary structure, homodimer. Pyridoxal 5'-phosphate is required as a cofactor.

The protein localises to the cytoplasm. It catalyses the reaction (S)-4-amino-5-oxopentanoate = 5-aminolevulinate. Its pathway is porphyrin-containing compound metabolism; protoporphyrin-IX biosynthesis; 5-aminolevulinate from L-glutamyl-tRNA(Glu): step 2/2. The protein is Glutamate-1-semialdehyde 2,1-aminomutase of Citrifermentans bemidjiense (strain ATCC BAA-1014 / DSM 16622 / JCM 12645 / Bem) (Geobacter bemidjiensis).